Consider the following 88-residue polypeptide: Large ribosomal subunit protein bL27 (88 aa).

Positions 1–20 (MASKKGVGSTKDGRDSIAKR) are disordered.

Belongs to the bacterial ribosomal protein bL27 family.

This chain is Large ribosomal subunit protein bL27 (rpmA), found in Geobacillus stearothermophilus (Bacillus stearothermophilus).